A 156-amino-acid polypeptide reads, in one-letter code: Methylated-DNA--protein-cysteine methyltransferase (156 aa).

Catalysis depends on Cys-126, which acts as the Nucleophile; methyl group acceptor.

Belongs to the MGMT family.

It is found in the cytoplasm. The enzyme catalyses a 6-O-methyl-2'-deoxyguanosine in DNA + L-cysteinyl-[protein] = S-methyl-L-cysteinyl-[protein] + a 2'-deoxyguanosine in DNA. The catalysed reaction is a 4-O-methyl-thymidine in DNA + L-cysteinyl-[protein] = a thymidine in DNA + S-methyl-L-cysteinyl-[protein]. Its function is as follows. Involved in the cellular defense against the biological effects of O6-methylguanine (O6-MeG) and O4-methylthymine (O4-MeT) in DNA. Repairs the methylated nucleobase in DNA by stoichiometrically transferring the methyl group to a cysteine residue in the enzyme. This is a suicide reaction: the enzyme is irreversibly inactivated. The protein is Methylated-DNA--protein-cysteine methyltransferase of Methanosarcina acetivorans (strain ATCC 35395 / DSM 2834 / JCM 12185 / C2A).